The sequence spans 524 residues: Ribosomal protein uS12 methylthiotransferase RimO (524 aa).

Residues 20–31 are compositionally biased toward polar residues; it reads NSQTASDSTQPA. Residues 20–59 are disordered; it reads NSQTASDSTQPAASAYHHKANHNQNRSIEQSAQQAAEQSL. A compositionally biased stretch (low complexity) spans 48 to 58; sequence EQSAQQAAEQS. An MTTase N-terminal domain is found at 67-177; sequence PKVGFVSLGC…VITAVSTHAP (111 aa). Cysteine 76, cysteine 112, cysteine 141, cysteine 216, cysteine 220, and cysteine 223 together coordinate [4Fe-4S] cluster. A Radical SAM core domain is found at 202-443; it reads LTPSHYAYLK…MAVQQQISEQ (242 aa). The 74-residue stretch at 446–519 folds into the TRAM domain; sequence QEKVGKTMTV…EYDLFASYDA (74 aa).

It belongs to the methylthiotransferase family. RimO subfamily. Requires [4Fe-4S] cluster as cofactor.

It localises to the cytoplasm. It catalyses the reaction L-aspartate(89)-[ribosomal protein uS12]-hydrogen + (sulfur carrier)-SH + AH2 + 2 S-adenosyl-L-methionine = 3-methylsulfanyl-L-aspartate(89)-[ribosomal protein uS12]-hydrogen + (sulfur carrier)-H + 5'-deoxyadenosine + L-methionine + A + S-adenosyl-L-homocysteine + 2 H(+). Catalyzes the methylthiolation of an aspartic acid residue of ribosomal protein uS12. The protein is Ribosomal protein uS12 methylthiotransferase RimO of Psychrobacter sp. (strain PRwf-1).